Here is a 655-residue protein sequence, read N- to C-terminus: A-type voltage-gated potassium channel KCND3 (655 aa).

At 1-182 (MAAGVAAWLP…FENPHTSTLA (182 aa)) the chain is on the cytoplasmic side. The interaction with KCNIP1 and KCNIP2 stretch occupies residues 6-21 (AAWLPFARAAAIGWMP). The interaction with KCNIP1 stretch occupies residues 70-78 (EKEFFFNED). His104, Cys110, Cys131, and Cys132 together coordinate Zn(2+). Residue Ser153 is modified to Phosphoserine. Residues 183-204 (LVFYYVTGFFIAVSVITNVVET) traverse the membrane as a helical segment. The Extracellular segment spans residues 205–223 (VPCGTVPGSKELPCGERYS). Residues 224–246 (VAFFCLDTACVMIFTVEYLLRLF) form a helical membrane-spanning segment. At 247 to 253 (AAPSRYR) the chain is on the cytoplasmic side. Residues 254-277 (FIRSVMSIIDVVAIMPYYIGLVMT) traverse the membrane as a helical segment. Over 278–283 (NNEDVS) the chain is Extracellular. The helical; Voltage-sensor transmembrane segment at 284 to 306 (GAFVTLRVFRVFRIFKFSRHSQG) threads the bilayer. At 307-318 (LRILGYTLKSCA) the chain is on the cytoplasmic side. Residues 319–343 (SELGFLLFSLTMAIIIFATVMFYAE) form a helical membrane-spanning segment. At 344 to 352 (KGSSASKFT) the chain is on the extracellular side. Positions 353–366 (SIPASFWYTIVTMT) form an intramembrane region, helical. K(+)-binding residues include Thr367, Leu368, Gly369, and Tyr370. The Selectivity filter motif lies at 367–372 (TLGYGD). An intramembrane segment occupies 367-374 (TLGYGDMV). Residues 378 to 400 (IAGKIFGSICSLSGVLVIALPVP) form a helical membrane-spanning segment. The Cytoplasmic segment spans residues 401 to 655 (VIVSNFSRIY…ASNVVKVSVL (255 aa)). Thr459 carries the phosphothreonine modification. Residues 470 to 487 (SLIESQHHHLLHCLEKTT) are interaction with KCNIP1 and KCNIP2. Residues 472-487 (IESQHHHLLHCLEKTT) form a mediates dendritic targeting region. At Ser569 the chain carries Phosphoserine; by CaMK2D. At Ser585 the chain carries Phosphoserine. Residues 618–644 (PAPPALTPEGETRPPPASPGPNTNIPS) form a disordered region.

Belongs to the potassium channel family. D (Shal) (TC 1.A.1.2) subfamily. Kv4.3/KCND3 sub-subfamily. As to quaternary structure, homotetramer. Heterotetramer with KCND2. Associates with the regulatory subunits KCNIP3 and KCNIP4. Interacts with KCNE1, KCNE2, SCN1B and KCNAB1 and DLG1. Component of heteromultimeric potassium channels. Identified in potassium channel complexes containing KCND1, KCND2, KCND3, KCNIP1, KCNIP2, KCNIP3, KCNIP4, DPP6 and DPP10. Interacts with KCNIP1; each KCNIP1 monomer interacts with two adjacent KCND3 subunits, through both the N-terminal inactivation ball of a KCND3 subunit and a C-terminal helix from the adjacent KCND3 subunit, clamping them together; this interaction stabilizes the tetrameric form and modulates the channel gating kinetics namely channel activation and inactivation kinetics and rate of recovery from inactivation. Interacts with DPP6; this interaction modulates the channel gating kinetics namely channel activation and inactivation kinetics and rate of recovery from inactivation. Interacts with KCNIP2; each KCNIP2 monomer interacts with two adjacent KCND3 subunits, through both the N-terminal inactivation ball of a KCND3 subunit and a C-terminal helix from the adjacent KCND3 subunit, clamping them together; this interaction modulates the channel gating kinetics. Regulated through phosphorylation at Ser-569 by CaMK2D. As to expression, detected in carotid body chemoreceptor cells and in frontal cortex.

It localises to the cell membrane. The protein localises to the sarcolemma. It is found in the cell projection. The protein resides in the dendrite. The catalysed reaction is K(+)(in) = K(+)(out). Its function is as follows. Pore-forming (alpha) subunit of voltage-gated A-type potassium channels that mediates transmembrane potassium transport in excitable membranes, in brain and heart. In cardiomyocytes, may generate the transient outward potassium current I(To). In neurons, may conduct the transient subthreshold somatodendritic A-type potassium current (ISA). Kinetics properties are characterized by fast activation at subthreshold membrane potentials, rapid inactivation, and quick recovery from inactivation. Channel properties are modulated by interactions with regulatory subunits. Interaction with the regulatory subunits KCNIP1 or KCNIP2 modulates the channel gating kinetics namely channel activation and inactivation kinetics and rate of recovery from inactivation. Likewise, interaction with DPP6 modulates the channel gating kinetics namely channel activation and inactivation kinetics. This chain is A-type voltage-gated potassium channel KCND3, found in Oryctolagus cuniculus (Rabbit).